The sequence spans 217 residues: DNA helicase assembly protein (217 aa).

This sequence belongs to the Tequatrovirus DNA helicase assembly protein family. Monomer. Homohexamer; when associated with DNA. Interacts (via C-terminus) with the DnaB-like replicative helicase (via C-terminus); this interaction brings about the rapid assembly of the helicase onto ssDNA. Interacts (via C-terminus) with the single-stranded DNA-binding protein; a ternary complex between the helicase assembly protein, the single-stranded DNA-binding protein and ssDNA is an obligatory intermediate in the helicase loading mechanism. Interacts with the viral DNA polymerase. Binds to single and double-stranded DNA. Part of the replicase complex that includes the DNA polymerase, the polymerase clamp, the clamp loader complex, the single-stranded DNA binding protein (SSB), the primase, the DnaB-like replicative helicase and the helicase assembly factor.

Its function is as follows. DNA helicase loader protein that participates in viral DNA replication, recombination, and repair. At the fork, required for loading of the replicative helicase onto DNA protected by the ssDNA-binding protein. Coordinates simultaneous synthesis of leading- and lagging-strands. This chain is DNA helicase assembly protein, found in Enterobacteria phage T4 (Bacteriophage T4).